We begin with the raw amino-acid sequence, 188 residues long: Elongation factor P (188 aa).

K34 bears the N6-(3,6-diaminohexanoyl)-5-hydroxylysine mark.

The protein belongs to the elongation factor P family. Post-translationally, may be beta-lysylated on the epsilon-amino group of Lys-34 by the combined action of EpmA and EpmB, and then hydroxylated on the C5 position of the same residue by EpmC (if this protein is present). Lysylation is critical for the stimulatory effect of EF-P on peptide-bond formation. The lysylation moiety may extend toward the peptidyltransferase center and stabilize the terminal 3-CCA end of the tRNA. Hydroxylation of the C5 position on Lys-34 may allow additional potential stabilizing hydrogen-bond interactions with the P-tRNA.

It is found in the cytoplasm. Its pathway is protein biosynthesis; polypeptide chain elongation. In terms of biological role, involved in peptide bond synthesis. Alleviates ribosome stalling that occurs when 3 or more consecutive Pro residues or the sequence PPG is present in a protein, possibly by augmenting the peptidyl transferase activity of the ribosome. Modification of Lys-34 is required for alleviation. The sequence is that of Elongation factor P from Histophilus somni (strain 129Pt) (Haemophilus somnus).